A 450-amino-acid polypeptide reads, in one-letter code: TATA box-binding protein-associated factor RNA polymerase I subunit A (450 aa).

Component of the transcription factor SL1/TIF-IB complex, composed of TBP and at least TAF1A, TAF1B, TAF1C and TAF1D. In the complex interacts directly with TBP, TAF1A and TAF1B. Interaction of the SL1/TIF-IB subunits with TBP excludes interaction of TBP with the transcription factor IID (TFIID) subunits. Interacts with UBFT. Interacts with CEBPA (isoform 1 and isoform 4). Part of Pol I pre-initiation complex (PIC), in which Pol I core assembles with RRN3 and promoter-bound UTBF and SL1/TIF-IB complex.

The protein localises to the nucleus. It localises to the nucleolus. Component of the transcription factor SL1/TIF-IB complex, which is involved in the assembly of the PIC (pre-initiation complex) during RNA polymerase I-dependent transcription. The rate of PIC formation probably is primarily dependent on the rate of association of SL1/TIF-IB with the rDNA promoter. SL1/TIF-IB is involved in stabilization of nucleolar transcription factor 1/UBTF on rDNA. Formation of SL1/TIF-IB excludes the association of TBP with TFIID subunits. The polypeptide is TATA box-binding protein-associated factor RNA polymerase I subunit A (TAF1A) (Homo sapiens (Human)).